The chain runs to 607 residues: Large ribosomal subunit assembly factor BipA (607 aa).

In terms of domain architecture, tr-type G spans 3–198 (HSIRNIAIIA…SIIKYAPAPN (196 aa)). GTP contacts are provided by residues 15-20 (DHGKTT) and 128-131 (NKID).

This sequence belongs to the TRAFAC class translation factor GTPase superfamily. Classic translation factor GTPase family. BipA subfamily. In terms of assembly, monomer.

Its subcellular location is the cytoplasm. The enzyme catalyses GTP + H2O = GDP + phosphate + H(+). Its function is as follows. A 50S ribosomal subunit assembly protein with GTPase activity, required for 50S subunit assembly at low temperatures, may also play a role in translation. Binds GTP and analogs. Binds the 70S ribosome between the 30S and 50S subunits, in a similar position as ribosome-bound EF-G; it contacts a number of ribosomal proteins, both rRNAs and the A-site tRNA. The polypeptide is Large ribosomal subunit assembly factor BipA (Buchnera aphidicola subsp. Acyrthosiphon pisum (strain APS) (Acyrthosiphon pisum symbiotic bacterium)).